Consider the following 744-residue polypeptide: MAVLPGPLQLLGVLLTISLSSIRLIQAGAYYGIKPLPPQIPPQMPPQIPQYQPLGQQVPHMPLAKDGLAMGKEMPHLQYGKEYPHLPQYMKEIQPAPRMGKEAVPKKGKEIPLASLRGEQGPRGEPGPRGPPGPPGLPGHGIPGIKGKPGPQGYPGVGKPGMPGMPGKPGAMGMPGAKGEIGQKGEIGPMGIPGPQGPPGPHGLPGIGKPGGPGLPGQPGPKGDRGPKGLPGPQGLRGPKGDKGFGMPGAPGVKGPPGMHGPPGPVGLPGVGKPGVTGFPGPQGPLGKPGAPGEPGPQGPIGVPGVQGPPGIPGIGKPGQDGIPGQPGFPGGKGEQGLPGLPGPPGLPGIGKPGFPGPKGDRGMGGVPGALGPRGEKGPIGAPGIGGPPGEPGLPGIPGPMGPPGAIGFPGPKGEGGIVGPQGPPGPKGEPGLQGFPGKPGFLGEVGPPGMRGLPGPIGPKGEAGQKGVPGLPGVPGLLGPKGEPGIPGDQGLQGPPGIPGIGGPSGPIGPPGIPGPKGEPGLPGPPGFPGIGKPGVAGLHGPPGKPGALGPQGQPGLPGPPGPPGPPGPPAVMPPTPPPQGEYLPDMGLGIDGVKPPHAYGAKKGKNGGPAYEMPAFTAELTAPFPPVGAPVKFNKLLYNGRQNYNPQTGIFTCEVPGVYYFAYHVHCKGGNVWVALFKNNEPVMYTYDEYKKGFLDQASGSAVLLLRPGDRVFLQMPSEQAAGLYAGQYVHSSFSGYLLYPM.

Residues 1–27 (MAVLPGPLQLLGVLLTISLSSIRLIQA) form the signal peptide. The interval 29-117 (AYYGIKPLPP…GKEIPLASLR (89 aa)) is nonhelical region (NC2). 2 disordered regions span residues 115–393 (SLRG…GEPG) and 459–589 (GPKG…PDMG). The segment at 118-571 (GEQGPRGEPG…PGPPGPPGPP (454 aa)) is triple-helical region (COL1). Positions 128–137 (PRGPPGPPGL) are enriched in pro residues. The span at 168–178 (KPGAMGMPGAK) shows a compositional bias: low complexity. 2 stretches are compositionally biased toward gly residues: residues 203-217 (GLPG…GLPG) and 328-337 (GFPGGKGEQG). 2 stretches are compositionally biased toward low complexity: residues 466-496 (QKGV…LQGP) and 538-556 (AGLH…QGQP). Over residues 558-581 (LPGPPGPPGPPGPPAVMPPTPPPQ) the composition is skewed to pro residues. Residues 572–744 (AVMPPTPPPQ…SFSGYLLYPM (173 aa)) form a nonhelical region (NC1) region. One can recognise a C1q domain in the interval 611–744 (PAYEMPAFTA…SFSGYLLYPM (134 aa)).

Homotrimers, or heterotrimers in association with alpha 2(VIII) type collagens. Four homotrimers can form a tetrahedron stabilized by central interacting C-terminal NC1 trimers. Post-translationally, prolines at the third position of the tripeptide repeating unit (G-X-Y) are hydroxylated in some or all of the chains. Proteolytically cleaved by neutrophil elastase, in vitro. Proteolytic processing produces the C-terminal NC1 domain fragment, vastatin. In terms of tissue distribution, expressed primarily in the subendothelium of large blood vessels. Also expressed in arterioles and venules in muscle, heart, kidney, spleen, umbilical cord, liver and lung and is also found in connective tissue layers around hair follicles, around nerve bundles in muscle, in the dura of the optic nerve, in cornea and sclera, and in the perichondrium of cartilaginous tissues. In the kidney, expressed in mesangial cells, glomerular endothelial cells, and tubular epithelial cells. Also expressed in mast cells, and in astrocytes during the repair process. Expressed in Descemet's membrane. Specifically expressed in peritoneal fibroblasts and mesothelial cells.

Its subcellular location is the secreted. It localises to the extracellular space. The protein localises to the extracellular matrix. It is found in the basement membrane. Its function is as follows. Macromolecular component of the subendothelium. Major component of the Descemet's membrane (basement membrane) of corneal endothelial cells. Also a component of the endothelia of blood vessels. Necessary for migration and proliferation of vascular smooth muscle cells and thus, has a potential role in the maintenance of vessel wall integrity and structure, in particular in atherogenesis. Functionally, vastatin, the C-terminal fragment comprising the NC1 domain, inhibits aortic endothelial cell proliferation and causes cell apoptosis. This chain is Collagen alpha-1(VIII) chain (COL8A1), found in Homo sapiens (Human).